The chain runs to 336 residues: Fructose-1,6-bisphosphatase class 1 (336 aa).

Mg(2+)-binding residues include E90, D112, L114, and D115. Substrate contacts are provided by residues 115–118, N211, and K277; that span reads DGSS. Residue E283 coordinates Mg(2+).

It belongs to the FBPase class 1 family. As to quaternary structure, homotetramer. Requires Mg(2+) as cofactor.

The protein resides in the cytoplasm. The catalysed reaction is beta-D-fructose 1,6-bisphosphate + H2O = beta-D-fructose 6-phosphate + phosphate. Its pathway is carbohydrate biosynthesis; gluconeogenesis. This is Fructose-1,6-bisphosphatase class 1 from Pseudomonas fluorescens (strain SBW25).